The sequence spans 315 residues: N-acetyl-D-glutamate racemase (315 aa).

Mg(2+) contacts are provided by Asp-147, Glu-173, and Asp-196.

This sequence belongs to the mandelate racemase/muconate lactonizing enzyme family. The cofactor is Mg(2+).

The catalysed reaction is N-acetyl-D-glutamate = N-acetyl-L-glutamate. The protein operates within amino-acid degradation. Functionally, racemase involved in a deamination-independent D-glutamate degradation pathway, named the DgcN-DgcA pathway. Catalyzes the conversion of N-acetyl-D-glutamate to N-acetyl-L-glutamate. Also shows racemase activity towards the dipeptide L-Ala-D-Glu, a key constituent of peptidoglycan muropeptides, suggesting that it may also contribute to the degradation of peptidoglycans. The chain is N-acetyl-D-glutamate racemase from Pseudoalteromonas sp.